The chain runs to 232 residues: C4-dicarboxylate TRAP transporter small permease protein DctQ (232 aa).

4 consecutive transmembrane segments (helical) span residues E30–M50, I58–S78, L103–S123, and F167–I187.

The protein belongs to the TRAP transporter small permease family. The complex comprises the extracytoplasmic solute receptor protein DctP, and the two transmembrane proteins DctQ and DctM.

Its subcellular location is the cell inner membrane. In terms of biological role, part of the tripartite ATP-independent periplasmic (TRAP) transport system DctPQM involved in C4-dicarboxylates uptake. The sequence is that of C4-dicarboxylate TRAP transporter small permease protein DctQ from Vibrio cholerae serotype O1 (strain ATCC 39315 / El Tor Inaba N16961).